Reading from the N-terminus, the 179-residue chain is Acireductone dioxygenase (179 aa).

Fe(2+) contacts are provided by His97, His99, Glu103, and His141. Residues His97, His99, Glu103, and His141 each contribute to the Ni(2+) site.

Belongs to the acireductone dioxygenase (ARD) family. As to quaternary structure, monomer. The cofactor is Fe(2+). Requires Ni(2+) as cofactor.

The enzyme catalyses 1,2-dihydroxy-5-(methylsulfanyl)pent-1-en-3-one + O2 = 3-(methylsulfanyl)propanoate + CO + formate + 2 H(+). It catalyses the reaction 1,2-dihydroxy-5-(methylsulfanyl)pent-1-en-3-one + O2 = 4-methylsulfanyl-2-oxobutanoate + formate + 2 H(+). Its pathway is amino-acid biosynthesis; L-methionine biosynthesis via salvage pathway; L-methionine from S-methyl-5-thio-alpha-D-ribose 1-phosphate: step 5/6. Functionally, catalyzes 2 different reactions between oxygen and the acireductone 1,2-dihydroxy-3-keto-5-methylthiopentene (DHK-MTPene) depending upon the metal bound in the active site. Fe-containing acireductone dioxygenase (Fe-ARD) produces formate and 2-keto-4-methylthiobutyrate (KMTB), the alpha-ketoacid precursor of methionine in the methionine recycle pathway. Ni-containing acireductone dioxygenase (Ni-ARD) produces methylthiopropionate, carbon monoxide and formate, and does not lie on the methionine recycle pathway. This is Acireductone dioxygenase from Granulibacter bethesdensis (strain ATCC BAA-1260 / CGDNIH1).